A 163-amino-acid polypeptide reads, in one-letter code: Phosphopantetheine adenylyltransferase (163 aa).

Thr10 is a binding site for substrate. ATP contacts are provided by residues Thr10 to Phe11 and His18. Substrate is bound by residues Lys42, Leu74, and Arg88. Residues Gly89–Arg91, Glu99, and Asn124–Thr130 contribute to the ATP site.

It belongs to the bacterial CoaD family. As to quaternary structure, homohexamer. It depends on Mg(2+) as a cofactor.

The protein resides in the cytoplasm. The catalysed reaction is (R)-4'-phosphopantetheine + ATP + H(+) = 3'-dephospho-CoA + diphosphate. Its pathway is cofactor biosynthesis; coenzyme A biosynthesis; CoA from (R)-pantothenate: step 4/5. Reversibly transfers an adenylyl group from ATP to 4'-phosphopantetheine, yielding dephospho-CoA (dPCoA) and pyrophosphate. The polypeptide is Phosphopantetheine adenylyltransferase (Shewanella putrefaciens (strain CN-32 / ATCC BAA-453)).